A 634-amino-acid chain; its full sequence is Phosphatase and actin regulator 2 (634 aa).

Disordered regions lie at residues 1–32, 84–344, 412–471, and 485–508; these read MDNA…KRKG, LPDQ…PLED, PQLL…ALAS, and NRPS…ERQE. Asp2 carries the N-myristoyl glycine lipid modification. The segment covering 13–26 has biased composition (polar residues); that stretch reads IANSDGPTAGSQTP. Phosphoserine is present on Ser16. Thr25 bears the Phosphothreonine mark. Residues 60–85 form an RPEL 1 repeat; sequence AVLERKISTRQSREELIRRGVLKELP. Composition is skewed to basic and acidic residues over residues 108–120 and 137–147; these read ESTR…KSEE and EDKKENTENHS. A compositionally biased stretch (pro residues) spans 153-162; sequence PALPPSAPPK. Composition is skewed to low complexity over residues 231-247 and 276-290; these read GSKA…SSRP and TSHL…GTSD. Residues 291–304 show a composition bias toward basic and acidic residues; it reads LKGEPAETRVESFK. Residues 324 to 341 show a composition bias toward pro residues; that stretch reads VPPPPVAPAPSPLAPPLP. At Ser423 the chain carries Phosphoserine. Acidic residues predominate over residues 452–464; sequence TDDEDEDEDEDGS. RPEL repeat units follow at residues 477–502, 515–540, and 553–578; these read DTLA…QRTS, TKLV…KQKN, and RRLS…RFNE. Positions 488–508 are enriched in basic and acidic residues; it reads SKKELEDKNILQRTSEEERQE. Ser522 and Ser560 each carry phosphoserine.

Belongs to the phosphatase and actin regulator family. In terms of assembly, binds PPP1CA and actin.

The protein localises to the membrane. The chain is Phosphatase and actin regulator 2 (PHACTR2) from Homo sapiens (Human).